A 338-amino-acid polypeptide reads, in one-letter code: Aspartate carbamoyltransferase catalytic subunit (338 aa).

Residues Arg-72 and Thr-73 each coordinate carbamoyl phosphate. Lys-100 is an L-aspartate binding site. The carbamoyl phosphate site is built by Arg-122, His-152, and Gln-155. Positions 186 and 243 each coordinate L-aspartate. Gly-284 and Pro-285 together coordinate carbamoyl phosphate.

Belongs to the aspartate/ornithine carbamoyltransferase superfamily. ATCase family. Heterododecamer (2C3:3R2) of six catalytic PyrB chains organized as two trimers (C3), and six regulatory PyrI chains organized as three dimers (R2).

It carries out the reaction carbamoyl phosphate + L-aspartate = N-carbamoyl-L-aspartate + phosphate + H(+). It participates in pyrimidine metabolism; UMP biosynthesis via de novo pathway; (S)-dihydroorotate from bicarbonate: step 2/3. In terms of biological role, catalyzes the condensation of carbamoyl phosphate and aspartate to form carbamoyl aspartate and inorganic phosphate, the committed step in the de novo pyrimidine nucleotide biosynthesis pathway. This Acinetobacter baumannii (strain AB307-0294) protein is Aspartate carbamoyltransferase catalytic subunit.